The primary structure comprises 124 residues: Large ribosomal subunit protein bL12 (124 aa).

This sequence belongs to the bacterial ribosomal protein bL12 family. As to quaternary structure, homodimer. Part of the ribosomal stalk of the 50S ribosomal subunit. Forms a multimeric L10(L12)X complex, where L10 forms an elongated spine to which 2 to 4 L12 dimers bind in a sequential fashion. Binds GTP-bound translation factors.

Forms part of the ribosomal stalk which helps the ribosome interact with GTP-bound translation factors. Is thus essential for accurate translation. This is Large ribosomal subunit protein bL12 from Desulfitobacterium hafniense (strain DSM 10664 / DCB-2).